Consider the following 129-residue polypeptide: Lysozyme C-2 (129 aa).

Residues 1 to 129 enclose the C-type lysozyme domain; the sequence is KVFERCELAR…VSSYVEGCTL (129 aa). Disulfide bonds link C6–C127, C30–C115, C65–C81, and C77–C95. Catalysis depends on residues E35 and D53.

It belongs to the glycosyl hydrolase 22 family. Monomer.

It carries out the reaction Hydrolysis of (1-&gt;4)-beta-linkages between N-acetylmuramic acid and N-acetyl-D-glucosamine residues in a peptidoglycan and between N-acetyl-D-glucosamine residues in chitodextrins.. Functionally, lysozymes have primarily a bacteriolytic function; those in tissues and body fluids are associated with the monocyte-macrophage system and enhance the activity of immunoagents. This chain is Lysozyme C-2, found in Capra hircus (Goat).